The chain runs to 474 residues: Catalase (474 aa).

Active-site residues include His52 and Asn124. Heme is bound at residue Tyr334.

The protein belongs to the catalase family. Requires heme as cofactor.

It catalyses the reaction 2 H2O2 = O2 + 2 H2O. Its function is as follows. Decomposes hydrogen peroxide into water and oxygen; serves to protect cells from the toxic effects of hydrogen peroxide. The protein is Catalase (katA) of Campylobacter jejuni subsp. jejuni serotype O:2 (strain ATCC 700819 / NCTC 11168).